The chain runs to 184 residues: Shikimate kinase (184 aa).

ATP is bound at residue 18–23 (GAGKTT). Threonine 22 contributes to the Mg(2+) binding site. Aspartate 40, arginine 64, and glycine 86 together coordinate substrate. Arginine 124 contacts ATP. Arginine 143 is a substrate binding site. ATP is bound at residue glutamine 160.

It belongs to the shikimate kinase family. Monomer. It depends on Mg(2+) as a cofactor.

It localises to the cytoplasm. The catalysed reaction is shikimate + ATP = 3-phosphoshikimate + ADP + H(+). Its pathway is metabolic intermediate biosynthesis; chorismate biosynthesis; chorismate from D-erythrose 4-phosphate and phosphoenolpyruvate: step 5/7. Functionally, catalyzes the specific phosphorylation of the 3-hydroxyl group of shikimic acid using ATP as a cosubstrate. This chain is Shikimate kinase, found in Chromobacterium violaceum (strain ATCC 12472 / DSM 30191 / JCM 1249 / CCUG 213 / NBRC 12614 / NCIMB 9131 / NCTC 9757 / MK).